The following is a 368-amino-acid chain: 2-aminoethylphosphonate--pyruvate transaminase (368 aa).

Position 192 is an N6-(pyridoxal phosphate)lysine (Lys192).

It belongs to the class-V pyridoxal-phosphate-dependent aminotransferase family. PhnW subfamily. Homodimer. Pyridoxal 5'-phosphate serves as cofactor.

The catalysed reaction is (2-aminoethyl)phosphonate + pyruvate = phosphonoacetaldehyde + L-alanine. Involved in phosphonate degradation. This chain is 2-aminoethylphosphonate--pyruvate transaminase, found in Pseudomonas putida (strain ATCC 700007 / DSM 6899 / JCM 31910 / BCRC 17059 / LMG 24140 / F1).